A 111-amino-acid polypeptide reads, in one-letter code: Phosphoribosyl-AMP cyclohydrolase (111 aa).

A Mg(2+)-binding site is contributed by aspartate 80. Residue cysteine 81 participates in Zn(2+) binding. Positions 82 and 84 each coordinate Mg(2+). 2 residues coordinate Zn(2+): cysteine 97 and cysteine 104.

The protein belongs to the PRA-CH family. As to quaternary structure, homodimer. The cofactor is Mg(2+). Zn(2+) is required as a cofactor.

It localises to the cytoplasm. It catalyses the reaction 1-(5-phospho-beta-D-ribosyl)-5'-AMP + H2O = 1-(5-phospho-beta-D-ribosyl)-5-[(5-phospho-beta-D-ribosylamino)methylideneamino]imidazole-4-carboxamide. The protein operates within amino-acid biosynthesis; L-histidine biosynthesis; L-histidine from 5-phospho-alpha-D-ribose 1-diphosphate: step 3/9. In terms of biological role, catalyzes the hydrolysis of the adenine ring of phosphoribosyl-AMP. The chain is Phosphoribosyl-AMP cyclohydrolase from Mycobacterium marinum (strain ATCC BAA-535 / M).